Reading from the N-terminus, the 414-residue chain is TnpB-like protein MJ1635 (414 aa).

Positions 329, 332, 346, and 349 each coordinate Zn(2+).

It in the N-terminal section; belongs to the transposase 2 family. This sequence in the C-terminal section; belongs to the transposase 35 family.

This is TnpB-like protein MJ1635 from Methanocaldococcus jannaschii (strain ATCC 43067 / DSM 2661 / JAL-1 / JCM 10045 / NBRC 100440) (Methanococcus jannaschii).